Here is a 417-residue protein sequence, read N- to C-terminus: N-acetylmuramoyl-L-alanine amidase AmiC (417 aa).

The tat-type signal signal peptide spans 1-31 (MSGSNTAISRRRLLQGAGAMWLLSVSQVSLA). The disordered stretch occupies residues 166 to 185 (LEKQVPPAQSGPQPGKAGRD). Positions 190–404 (IMLDPGHGGE…VAESILAGIK (215 aa)) constitute a MurNAc-LAA domain.

Belongs to the N-acetylmuramoyl-L-alanine amidase 3 family. In terms of processing, predicted to be exported by the Tat system. The position of the signal peptide cleavage has not been experimentally proven.

Its subcellular location is the periplasm. It catalyses the reaction Hydrolyzes the link between N-acetylmuramoyl residues and L-amino acid residues in certain cell-wall glycopeptides.. Cell-wall hydrolase involved in septum cleavage during cell division. This Escherichia coli O6:H1 (strain CFT073 / ATCC 700928 / UPEC) protein is N-acetylmuramoyl-L-alanine amidase AmiC (amiC).